Consider the following 385-residue polypeptide: ATP phosphoribosyltransferase regulatory subunit (385 aa).

It belongs to the class-II aminoacyl-tRNA synthetase family. HisZ subfamily. In terms of assembly, heteromultimer composed of HisG and HisZ subunits.

It localises to the cytoplasm. Its pathway is amino-acid biosynthesis; L-histidine biosynthesis; L-histidine from 5-phospho-alpha-D-ribose 1-diphosphate: step 1/9. Its function is as follows. Required for the first step of histidine biosynthesis. May allow the feedback regulation of ATP phosphoribosyltransferase activity by histidine. The polypeptide is ATP phosphoribosyltransferase regulatory subunit (Bordetella petrii (strain ATCC BAA-461 / DSM 12804 / CCUG 43448)).